The chain runs to 467 residues: Argininosuccinate lyase (467 aa).

It belongs to the lyase 1 family. Argininosuccinate lyase subfamily.

It localises to the cytoplasm. It carries out the reaction 2-(N(omega)-L-arginino)succinate = fumarate + L-arginine. It functions in the pathway amino-acid biosynthesis; L-arginine biosynthesis; L-arginine from L-ornithine and carbamoyl phosphate: step 3/3. The sequence is that of Argininosuccinate lyase from Allorhizobium ampelinum (strain ATCC BAA-846 / DSM 112012 / S4) (Agrobacterium vitis (strain S4)).